A 360-amino-acid polypeptide reads, in one-letter code: Amine dehydrogenase (360 aa).

This sequence belongs to the amine dehydrogenase family. Homodimer.

It catalyses the reaction a secondary alkyl amine + NAD(+) + H2O = a ketone + NH4(+) + NADH + H(+). The catalysed reaction is a secondary alkyl amine + NADP(+) + H2O = a ketone + NH4(+) + NADPH + H(+). The enzyme catalyses serinol + NAD(+) + H2O = dihydroxyacetone + NH4(+) + NADH + H(+). It carries out the reaction serinol + NADP(+) + H2O = dihydroxyacetone + NH4(+) + NADPH + H(+). It catalyses the reaction 2-aminopropan-1-ol + NAD(+) + H2O = hydroxyacetone + NH4(+) + NADH + H(+). The catalysed reaction is (R)-1-phenylethylamine + NAD(+) + H2O = acetophenone + NH4(+) + NADH + H(+). The enzyme catalyses (S)-1-phenylethylamine + NAD(+) + H2O = acetophenone + NH4(+) + NADH + H(+). It carries out the reaction (2S)-2-aminobutan-1-ol + NAD(+) + H2O = 1-hydroxy-2-butanone + NH4(+) + NADH + H(+). It catalyses the reaction (2S)-2-amino-3-methylbutan-1-ol + NAD(+) + H2O = 1-hydroxy-3-methylbutan-2-one + NH4(+) + NADH + H(+). The catalysed reaction is 2-aminopentan-1-ol + NAD(+) + H2O = 1-hydroxypentan-2-one + NH4(+) + NADH + H(+). The enzyme catalyses (S)-leucinol + NAD(+) + H2O = 1-hydroxy-4-methylpentan-2-one + NH4(+) + NADH + H(+). It carries out the reaction (S)-isoleucinol + NAD(+) + H2O = (3S)-1-hydroxy-3-methylpentan-2-one + NH4(+) + NADH + H(+). It catalyses the reaction (S)-methioninol + NAD(+) + H2O = 1-hydroxy-4-(methythio)butan-2-one + NH4(+) + NADH + H(+). The catalysed reaction is 2-aminocyclohexanol + NAD(+) + H2O = 2-hydroxycyclohexan-1-one + NH4(+) + NADH + H(+). The enzyme catalyses L-alanine + NAD(+) + H2O = pyruvate + NH4(+) + NADH + H(+). It carries out the reaction D-alanine + NAD(+) + H2O = pyruvate + NH4(+) + NADH + H(+). It catalyses the reaction L-aspartate + NAD(+) + H2O = oxaloacetate + NH4(+) + NADH + H(+). The catalysed reaction is D-aspartate + NAD(+) + H2O = oxaloacetate + NH4(+) + NADH + H(+). The enzyme catalyses L-glutamate + NAD(+) + H2O = 2-oxoglutarate + NH4(+) + NADH + H(+). It carries out the reaction D-glutamate + NAD(+) + H2O = 2-oxoglutarate + NH4(+) + NADH + H(+). It catalyses the reaction L-serine + NAD(+) + H2O = 3-hydroxypyruvate + NH4(+) + NADH + H(+). The catalysed reaction is D-serine + NAD(+) + H2O = 3-hydroxypyruvate + NH4(+) + NADH + H(+). The enzyme catalyses methylamine + NAD(+) + H2O = formaldehyde + NH4(+) + NADH + H(+). It carries out the reaction ethylamine + NAD(+) + H2O = acetaldehyde + NH4(+) + NADH + H(+). It catalyses the reaction propylamine + NAD(+) + H2O = propanal + NH4(+) + NADH + H(+). The catalysed reaction is butylamine + NAD(+) + H2O = butanal + NH4(+) + NADH + H(+). The enzyme catalyses hexylamine + NAD(+) + H2O = hexanal + NH4(+) + NADH + H(+). It carries out the reaction octylamine + NAD(+) + H2O = octanal + NH4(+) + NADH + H(+). It catalyses the reaction (R)-sec-butylamine + NAD(+) + H2O = butan-2-one + NH4(+) + NADH + H(+). The catalysed reaction is (S)-sec-butylamine + NAD(+) + H2O = butan-2-one + NH4(+) + NADH + H(+). The enzyme catalyses 2-aminopentane + NAD(+) + H2O = pentan-2-one + NH4(+) + NADH + H(+). It carries out the reaction 3-aminopentane + NAD(+) + H2O = pentan-3-one + NH4(+) + NADH + H(+). It catalyses the reaction (2R)-heptan-2-amine + NAD(+) + H2O = heptan-2-one + NH4(+) + NADH + H(+). The catalysed reaction is (2S)-heptan-2-amine + NAD(+) + H2O = heptan-2-one + NH4(+) + NADH + H(+). The enzyme catalyses benzylamine + NAD(+) + H2O = benzaldehyde + NH4(+) + NADH + H(+). It carries out the reaction 3-aminobutan-2-ol + NAD(+) + H2O = acetoin + NH4(+) + NADH + H(+). It catalyses the reaction 3-aminobutan-1-ol + NAD(+) + H2O = 4-hydroxybutan-2-one + NH4(+) + NADH + H(+). The catalysed reaction is 5-hydroxypentan-2-amine + NAD(+) + H2O = 5-hydroxypentan-2-one + NH4(+) + NADH + H(+). The enzyme catalyses 4-hydroxyhexan-3-amine + NAD(+) + H2O = 4-hydroxyhexan-3-one + NH4(+) + NADH + H(+). It carries out the reaction 5-hydroxyoctan-4-amine + NAD(+) + H2O = 5-hydroxyoctan-4-one + NH4(+) + NADH + H(+). It catalyses the reaction 2-hydroxy-1-phenylethan-1-amine + NAD(+) + H2O = 2-hydroxyacetophenone + NH4(+) + NADH + H(+). The catalysed reaction is hexan-2-amine + NAD(+) + H2O = hexan-2-one + NH4(+) + NADH + H(+). The enzyme catalyses 4-phenylbutan-2-amine + NAD(+) + H2O = 4-phenylbutan-2-one + NH4(+) + NADH + H(+). Catalyzes the reversible oxidative deaminations of a broad range of amines, amino alcohols and amino acids. Catalyzes the reversible dehydrogenation of serinol in the presence of NAD(+) to give dihydroxyacetone, ammonium ion and NADH, while NADP(+) shows a slight activity. Is also able to produce 2-amino-1-propanol and aspartate by the reductive amination of the corresponding keto alcohol (hydroxyacetone) and keto acid (oxaloacetate) in the presence of ammonium ions and NADH, and that of acetophenone from phenylethylamine by the oxidative deamination in the presence of NAD(+). The sequence is that of Amine dehydrogenase from Streptomyces virginiae (Streptomyces cinnamonensis).